A 241-amino-acid chain; its full sequence is 3-deoxy-D-manno-octulosonic acid kinase (241 aa).

Asp-171 is a catalytic residue.

It belongs to the protein kinase superfamily. KdkA/RfaP family.

It localises to the cell inner membrane. The enzyme catalyses an alpha-Kdo-(2-&gt;6)-lipid IVA + ATP = a 4-O-phospho-alpha-Kdo-(2-&gt;6)-lipid IVA + ADP + H(+). It functions in the pathway bacterial outer membrane biogenesis; LPS core biosynthesis. Its function is as follows. Catalyzes the ATP-dependent phosphorylation of the 3-deoxy-D-manno-octulosonic acid (Kdo) residue in Kdo-lipid IV(A) at the 4-OH position. The sequence is that of 3-deoxy-D-manno-octulosonic acid kinase from Haemophilus influenzae (strain PittEE).